The following is a 518-amino-acid chain: Nitrogenase iron-iron protein alpha chain (518 aa).

[8Fe-7S] cluster is bound by residues C49 and C75. C257 and H423 together coordinate [8Fe-9S-C-homocitryl] cluster.

As to quaternary structure, hexamer of two alpha, two beta, and two delta chains. It depends on [8Fe-7S] cluster as a cofactor. The cofactor is [8Fe-9S-C-homocitryl] cluster.

The enzyme catalyses N2 + 8 reduced [2Fe-2S]-[ferredoxin] + 16 ATP + 16 H2O = H2 + 8 oxidized [2Fe-2S]-[ferredoxin] + 2 NH4(+) + 16 ADP + 16 phosphate + 6 H(+). This iron-iron protein is part of the nitrogenase complex that catalyzes the key enzymatic reactions in nitrogen fixation. Other nitrogenase complexes utilize a molybdenum-iron protein or a vanadium-iron protein. The polypeptide is Nitrogenase iron-iron protein alpha chain (anfD) (Ruminiclostridium hungatei (Clostridium hungatei)).